Reading from the N-terminus, the 1650-residue chain is HEAT repeat-containing protein 1 homolog (1650 aa).

Residues 1183 to 1210 (QYDSAASPGSSVAGGRGNRGHRIRQQSL) are disordered. One copy of the HEAT repeat lies at 1609–1645 (LLPFLNELIEDENKQVEAQCQKVINSLQHKFGETFWS).

It belongs to the HEATR1/UTP10 family.

Its subcellular location is the nucleus. It localises to the nucleolus. Functionally, involved in nucleolar processing of pre-18S ribosomal RNA. Involved in ribosome biosynthesis. The polypeptide is HEAT repeat-containing protein 1 homolog (toe-1) (Caenorhabditis elegans).